A 264-amino-acid polypeptide reads, in one-letter code: Teichoic acids export ATP-binding protein TagH (264 aa).

The 239-residue stretch at 5–243 (VNIKNVTKEY…YEAFLNDFKK (239 aa)) folds into the ABC transporter domain. Position 57–64 (57–64 (GINGSGKS)) interacts with ATP.

The protein belongs to the ABC transporter superfamily. Teichoic acids exporter (TC 3.A.1.104.1) family. The complex is composed of two ATP-binding proteins (TagH) and two transmembrane proteins (TagG).

Its subcellular location is the cell membrane. It carries out the reaction ATP + H2O + teichoic acidSide 1 = ADP + phosphate + teichoic acidSide 2.. Functionally, part of the ABC transporter complex TagGH involved in teichoic acids export. Responsible for energy coupling to the transport system. The polypeptide is Teichoic acids export ATP-binding protein TagH (Staphylococcus aureus (strain Mu50 / ATCC 700699)).